Consider the following 523-residue polypeptide: NAD(P)H-quinone oxidoreductase subunit 2 (523 aa).

Transmembrane regions (helical) follow at residues 30-50 (VGPE…DLAG), 57-77 (WVPP…ALQW), 94-114 (LAIA…LISW), 128-148 (AAIL…TDLV), 182-202 (LLVG…LYGL), 223-243 (AALA…AVPF), 255-275 (PTPV…ALAL), 291-311 (LLFT…ALAQ), 317-337 (MLAY…VCGT), 345-365 (VLYM…IILF), 389-409 (LGLS…GFFG), 424-444 (VLVV…IGVI), and 477-497 (VALV…NPLF).

Belongs to the complex I subunit 2 family. As to quaternary structure, NDH-1 can be composed of about 15 different subunits; different subcomplexes with different compositions have been identified which probably have different functions.

The protein localises to the cellular thylakoid membrane. The enzyme catalyses a plastoquinone + NADH + (n+1) H(+)(in) = a plastoquinol + NAD(+) + n H(+)(out). The catalysed reaction is a plastoquinone + NADPH + (n+1) H(+)(in) = a plastoquinol + NADP(+) + n H(+)(out). Functionally, NDH-1 shuttles electrons from an unknown electron donor, via FMN and iron-sulfur (Fe-S) centers, to quinones in the respiratory and/or the photosynthetic chain. The immediate electron acceptor for the enzyme in this species is believed to be plastoquinone. Couples the redox reaction to proton translocation, and thus conserves the redox energy in a proton gradient. Cyanobacterial NDH-1 also plays a role in inorganic carbon-concentration. The chain is NAD(P)H-quinone oxidoreductase subunit 2 from Synechococcus sp. (strain CC9311).